The primary structure comprises 997 residues: Mannuronan C5-epimerase AlgE5 (997 aa).

PbH1 repeat units follow at residues 133-155, 157-179, 180-202, 204-226, 257-279, 280-315, and 320-359; these read DRDV…DPHE, TINL…VADF, QIGG…NIVT, TNDF…VIQR, AHDV…RVYG, AEDV…GVSG, and TTGT…SVSN. Hemolysin-type calcium-binding repeat units lie at residues 388-403, 406-422, 424-439, 557-573, 574-590, 695-709, 712-729, 828-839, 846-862, and 864-880; these read GTTG…AHET, GLDG…NDIL, GGAG…GADL, GHAG…DDIL, VGGA…GADL, GSAG…AADE, HGGA…ADVF, GSDGNDTLDGGS, GGAG…NDIL, and GGAG…SDIF.

The protein belongs to the D-mannuronate C5-epimerase family. Requires Ca(2+) as cofactor.

The protein resides in the secreted. The catalysed reaction is [(1-&gt;4)-beta-D-mannuronosyl](n) = [alginate](n). It functions in the pathway glycan biosynthesis; alginate biosynthesis. With respect to regulation, inhibited by zinc. Converts beta-D-mannuronic acid (M) to alpha-L-guluronic acid (G), producing a polymer with gel-forming capacity, required for the formation of the cyst coat. The sequence is that of Mannuronan C5-epimerase AlgE5 from Azotobacter vinelandii.